The primary structure comprises 249 residues: Probable transcriptional regulatory protein LBL_2537 (249 aa).

This sequence belongs to the TACO1 family.

It localises to the cytoplasm. In Leptospira borgpetersenii serovar Hardjo-bovis (strain L550), this protein is Probable transcriptional regulatory protein LBL_2537.